The sequence spans 216 residues: Peptide methionine sulfoxide reductase MsrA (216 aa).

Residue Cys54 is part of the active site.

This sequence belongs to the MsrA Met sulfoxide reductase family.

It carries out the reaction L-methionyl-[protein] + [thioredoxin]-disulfide + H2O = L-methionyl-(S)-S-oxide-[protein] + [thioredoxin]-dithiol. The enzyme catalyses [thioredoxin]-disulfide + L-methionine + H2O = L-methionine (S)-S-oxide + [thioredoxin]-dithiol. Functionally, has an important function as a repair enzyme for proteins that have been inactivated by oxidation. Catalyzes the reversible oxidation-reduction of methionine sulfoxide in proteins to methionine. This chain is Peptide methionine sulfoxide reductase MsrA, found in Xylella fastidiosa (strain M12).